A 213-amino-acid chain; its full sequence is Nicotinate-nucleotide adenylyltransferase (213 aa).

Belongs to the NadD family.

The enzyme catalyses nicotinate beta-D-ribonucleotide + ATP + H(+) = deamido-NAD(+) + diphosphate. Its pathway is cofactor biosynthesis; NAD(+) biosynthesis; deamido-NAD(+) from nicotinate D-ribonucleotide: step 1/1. In terms of biological role, catalyzes the reversible adenylation of nicotinate mononucleotide (NaMN) to nicotinic acid adenine dinucleotide (NaAD). The chain is Nicotinate-nucleotide adenylyltransferase from Salmonella typhimurium (strain LT2 / SGSC1412 / ATCC 700720).